A 120-amino-acid polypeptide reads, in one-letter code: Crustacean hyperglycemic hormones 2 (120 aa).

Residues 1–27 form the signal peptide; sequence MIAFHMVWSALLASLLLLLLAPSASPV. 3 cysteine pairs are disulfide-bonded: Cys53–Cys89, Cys69–Cys85, and Cys72–Cys98. A Valine amide modification is found at Val118.

The protein belongs to the arthropod CHH/MIH/GIH/VIH hormone family.

The protein resides in the secreted. In terms of biological role, hormone found in the sinus gland of isopods and decapods which controls the blood sugar level. Has a secretagogue action over the amylase released from the midgut gland. May act as a stress hormone and may be involved in the control of molting and reproduction. This Penaeus japonicus (Kuruma prawn) protein is Crustacean hyperglycemic hormones 2.